A 342-amino-acid polypeptide reads, in one-letter code: Strictosidine synthase (342 aa).

An N-terminal signal peptide occupies residues 1–20 (KLSDSQTMALFTVFLLFLSS). The N-linked (GlcNAc...) asparagine glycan is linked to Asn89.

Belongs to the strictosidine synthase family. Monomer.

It localises to the vacuole. The enzyme catalyses 3alpha(S)-strictosidine + H2O = secologanin + tryptamine. The protein operates within alkaloid biosynthesis; 3alpha(S)-strictosidine biosynthesis; 3alpha(S)-strictosidine from secologanin and tryptamine: step 1/1. In terms of biological role, catalyzes the stereospecific condensation of tryptamine with secologanin to form strictosidine, the key intermediate of indole alkaloid biosynthesis. In Rauvolfia mannii, this protein is Strictosidine synthase (STR1).